Here is a 291-residue protein sequence, read N- to C-terminus: Flavonol synthase/flavanone 3-hydroxylase (291 aa).

In terms of domain architecture, Fe2OG dioxygenase spans 151–250; it reads CWYVMNINHY…RMSWPVLVSP (100 aa). The Fe cation site is built by His-175, Asp-177, and His-231.

Belongs to the iron/ascorbate-dependent oxidoreductase family. It depends on L-ascorbate as a cofactor. Fe cation is required as a cofactor.

The protein resides in the cytoplasm. The catalysed reaction is a (2R,3R)-dihydroflavonol + 2-oxoglutarate + O2 = a flavonol + succinate + CO2 + H2O. It carries out the reaction a (2S)-flavan-4-one + 2-oxoglutarate + O2 = a (2R,3R)-dihydroflavonol + succinate + CO2. Its pathway is secondary metabolite biosynthesis; flavonoid biosynthesis. Catalyzes the formation of flavonols from dihydroflavonols. It can act on dihydrokaempferol to produce kaempferol, on dihydroquercetin to produce quercitin and on dihydromyricetin to produce myricetin. This is Flavonol synthase/flavanone 3-hydroxylase from Matthiola incana (Common stock).